Reading from the N-terminus, the 500-residue chain is Probable cytosol aminopeptidase (500 aa).

Residues Lys265 and Asp270 each coordinate Mn(2+). Lys277 is a catalytic residue. Mn(2+) contacts are provided by Asp288, Asp347, and Glu349. Residue Arg351 is part of the active site.

It belongs to the peptidase M17 family. Requires Mn(2+) as cofactor.

It localises to the cytoplasm. It carries out the reaction Release of an N-terminal amino acid, Xaa-|-Yaa-, in which Xaa is preferably Leu, but may be other amino acids including Pro although not Arg or Lys, and Yaa may be Pro. Amino acid amides and methyl esters are also readily hydrolyzed, but rates on arylamides are exceedingly low.. It catalyses the reaction Release of an N-terminal amino acid, preferentially leucine, but not glutamic or aspartic acids.. Functionally, presumably involved in the processing and regular turnover of intracellular proteins. Catalyzes the removal of unsubstituted N-terminal amino acids from various peptides. This Rickettsia felis (strain ATCC VR-1525 / URRWXCal2) (Rickettsia azadi) protein is Probable cytosol aminopeptidase.